Here is a 328-residue protein sequence, read N- to C-terminus: Carbonic anhydrase, chloroplastic (328 aa).

The segment covering 1-15 has biased composition (low complexity); the sequence is MSTSSINGFSLSSLS. Residues 1 to 26 are disordered; the sequence is MSTSSINGFSLSSLSPAKTSTKRTTL. Residues 1–70 constitute a chloroplast transit peptide; sequence MSTSSINGFS…IITPVLREEM (70 aa).

Belongs to the beta-class carbonic anhydrase family. As to quaternary structure, homohexamer.

It localises to the plastid. Its subcellular location is the chloroplast stroma. It catalyses the reaction hydrogencarbonate + H(+) = CO2 + H2O. Reversible hydration of carbon dioxide. In Pisum sativum (Garden pea), this protein is Carbonic anhydrase, chloroplastic.